A 663-amino-acid chain; its full sequence is MGVLLPIFFGVLLLFTVTPPSMSQLPPTIMVPAPAPAPISPSDLCNGIFLSYDFILGRKIPPNDTADQPYRFESVLTVLNNGREELKEWRVFVGFQHNEILISATDALIVNGTELPALVGNGTIFGGYPVSDLKTAIQTAGDLKQMTAEIELVGTQFMVAPPAVPLPSNISLVNEGWLCPVPTLQSKRELTTCCIRDASIIVNTTITTKFLPRQPGDLTIMYDVIRAYDQNYLTEVTMENHNPLGRLDHWELSFDWMRDEFIQKMQGAYPTVVDATKCIFGPQSLIYTGLDFADVLTCERRPIIIDLPPTKKDDSTLGNIPSCCRNGTILPRIMDPSKSVSVFTMQVAKMPPDFNRSALFPPQNWRIKGTLNPDYSCGPPVRVTPTFYPDPSGMPTNKSSFASWQIVCNITQAKTEIPKCCVSFSAFFNDSIIPCNTCACGCVSETRRTCSAETPSLLIPPDALLLPFENRTALTLAWNALKHKTLPNPMPCGDNCGVSINWHMASDYRGGWTVRITIFNWGEIDFPNWFLAVQMKKPALLGFEKAYSFNASLLSVDGGVNNTIFMEGLPGLDYLVAEADEKDPKKKNIRIPGKQQSVIQFSKKLTPGINVAERDGFPAKVIFNGEECLLPDLLPMASGGRRNGAITVLSFITFYVAAFMVLL.

Positions 1 to 23 (MGVLLPIFFGVLLLFTVTPPSMS) are cleaved as a signal peptide. 13 N-linked (GlcNAc...) asparagine glycosylation sites follow: Asn-63, Asn-111, Asn-121, Asn-169, Asn-203, Asn-326, Asn-355, Asn-397, Asn-409, Asn-429, Asn-470, Asn-550, and Asn-561. Ser-638 carries GPI-anchor amidated serine lipidation. Residues 639–663 (GGRRNGAITVLSFITFYVAAFMVLL) constitute a propeptide, removed in mature form.

Belongs to the COBRA family. In terms of tissue distribution, expressed only in flowers.

It localises to the cell membrane. The sequence is that of COBRA-like protein 9 (COBL9) from Arabidopsis thaliana (Mouse-ear cress).